The chain runs to 471 residues: Ubiquitin-conjugating enzyme E2 variant 3 (471 aa).

In terms of domain architecture, UEV spans 2–145; sequence DVNSEPVKKV…EEEPPLGTKS (144 aa). 183 to 211 contacts NAD(+); that stretch reads GDLGIAAVLSIMAKSCVDKLVLIDIPENS.

In the N-terminal section; belongs to the ubiquitin-conjugating enzyme family. UEV subfamily. It in the C-terminal section; belongs to the LDH/MDH superfamily. As to quaternary structure, homodimer.

Functionally, possible negative regulator of polyubiquitination. This Danio rerio (Zebrafish) protein is Ubiquitin-conjugating enzyme E2 variant 3 (uevld).